We begin with the raw amino-acid sequence, 154 residues long: Transcriptional repressor NrdR (154 aa).

A zinc finger spans residues 3–34 (CPTCQYNGTRVVDSRPADDGNSIRRRRECEKC). Residues 49 to 139 (LIVVKKDGAR…VYRQFKDISV (91 aa)) enclose the ATP-cone domain.

It belongs to the NrdR family. Zn(2+) serves as cofactor.

Functionally, negatively regulates transcription of bacterial ribonucleotide reductase nrd genes and operons by binding to NrdR-boxes. In Listeria monocytogenes serotype 4a (strain HCC23), this protein is Transcriptional repressor NrdR.